The sequence spans 101 residues: Enhancer of yellow 2 transcription factor (101 aa).

This sequence belongs to the ENY2 family. As to quaternary structure, component of the nuclear pore complex (NPC)-associated AMEX complex (anchoring and mRNA export complex), composed of at least e(y)2 and xmas-2. Component of the SAGA transcription coactivator-HAT complexes, at least composed of Ada2b, e(y)2, Pcaf/Gcn5, Taf10 and Nipped-A/Trrap. Within the SAGA complex, e(y)2, Sgf11, and not/nonstop form an additional subcomplex of SAGA called the DUB module (deubiquitination module). Component of the THO complex, composed of at least e(y)2, HPR1, THO2, THOC5, THOC6 and THOC7. Interacts with e(y)1. Interacts with su(Hw) (via zinc fingers). Interacts with xmas-2; required for localization to the nuclear periphery. Interacts with the nuclear pore complex (NPC).

It localises to the nucleus. Its subcellular location is the nucleoplasm. The protein localises to the cytoplasm. In terms of biological role, involved in mRNA export coupled transcription activation by association with both the AMEX and the SAGA complexes. The SAGA complex is a multiprotein complex that activates transcription by remodeling chromatin and mediating histone acetylation and deubiquitination. Within the SAGA complex, participates in a subcomplex that specifically deubiquitinates histone H2B. The SAGA complex is recruited to specific gene promoters by activators, where it is required for transcription. Required for nuclear receptor-mediated transactivation. Involved in transcription elongation by recruiting the THO complex onto nascent mRNA. The AMEX complex functions in docking export-competent ribonucleoprotein particles (mRNPs) to the nuclear entrance of the nuclear pore complex (nuclear basket). AMEX participates in mRNA export and accurate chromatin positioning in the nucleus by tethering genes to the nuclear periphery. The sequence is that of Enhancer of yellow 2 transcription factor from Drosophila erecta (Fruit fly).